We begin with the raw amino-acid sequence, 412 residues long: Class E basic helix-loop-helix protein 40 (412 aa).

The disordered stretch occupies residues 1 to 21 (MERIPSAQPPPTCLPKAPGLE). The interval 1 to 139 (MERIPSAQPP…LSGRNVEAGQ (139 aa)) is essential for interaction with BMAL1, E-box binding and repressor activity against the CLOCK-BMAL1 heterodimer. A bHLH domain is found at 52–107 (TYKLPHRLIEKKRRDRINECIAQLKDLLPEHLKLTTLGHLEKAVVLELTLKHVKAL). The interval 75-79 (LKDLL) is necessary for interaction with RXRA and repressor activity against RXRA. The Orange domain maps to 142–175 (FCSGFQTCAREVLQYLAKHENTRDLKSSQLVTHL). Lys159 is covalently cross-linked (Glycyl lysine isopeptide (Lys-Gly) (interchain with G-Cter in SUMO1, SUMO2 and SUMO3)). Lys167 participates in a covalent cross-link: Glycyl lysine isopeptide (Lys-Gly) (interchain with G-Cter in SUMO2). 2 disordered regions span residues 182 to 256 (LLQG…ELRV) and 279 to 298 (KQES…SDDE). Residue Ser235 is modified to Phosphoserine. A Glycyl lysine isopeptide (Lys-Gly) (interchain with G-Cter in SUMO1); alternate cross-link involves residue Lys279. Residue Lys279 forms a Glycyl lysine isopeptide (Lys-Gly) (interchain with G-Cter in SUMO1, SUMO2 and SUMO3); alternate linkage. Lys279 participates in a covalent cross-link: Glycyl lysine isopeptide (Lys-Gly) (interchain with G-Cter in SUMO2); alternate. Lys288 is covalently cross-linked (Glycyl lysine isopeptide (Lys-Gly) (interchain with G-Cter in SUMO2)). At Ser383 the chain carries Phosphoserine.

In terms of assembly, homodimer. Heterodimer with BHLHE41/DEC2. Interacts with TCF3/E47. Interacts with ubiquitin-conjugating enzyme UBE2I/UBC9. Interacts with HDAC1, SUMO1, RXRA and BMAL1. Ubiquitinated; which may lead to proteasomal degradation. Post-translationally, sumoylation inhibits its ubiquitination and promotes its negative regulation of the CLOCK-BMAL1 heterodimer transcriptional activator activity.

The protein localises to the cytoplasm. Its subcellular location is the nucleus. In terms of biological role, transcriptional repressor involved in the regulation of the circadian rhythm by negatively regulating the activity of the clock genes and clock-controlled genes. Acts as the negative limb of a novel autoregulatory feedback loop (DEC loop) which differs from the one formed by the PER and CRY transcriptional repressors (PER/CRY loop). Both these loops are interlocked as it represses the expression of PER1/2 and in turn is repressed by PER1/2 and CRY1/2. Represses the activity of the circadian transcriptional activator: CLOCK-BMAL1|BMAL2 heterodimer by competing for the binding to E-box elements (5'-CACGTG-3') found within the promoters of its target genes. Negatively regulates its own expression and the expression of DBP and BHLHE41/DEC2. Acts as a corepressor of RXR and the RXR-LXR heterodimers and represses the ligand-induced RXRA and NR1H3/LXRA transactivation activity. May be involved in the regulation of chondrocyte differentiation via the cAMP pathway. Represses the transcription of NR0B2 and attentuates the transactivation of NR0B2 by the CLOCK-BMAL1 complex. Drives the circadian rhythm of blood pressure through transcriptional repression of ATP1B1 in the cardiovascular system. The polypeptide is Class E basic helix-loop-helix protein 40 (BHLHE40) (Bos taurus (Bovine)).